The chain runs to 425 residues: COBRA-like protein 4 (425 aa).

The first 27 residues, 1 to 27, serve as a signal peptide directing secretion; the sequence is MAIGVGGCCAVLLAAALLFSSPATTYA. Asn36, Asn163, Asn171, Asn319, and Asn352 each carry an N-linked (GlcNAc...) asparagine glycan.

The protein belongs to the COBRA family.

This Oryza sativa subsp. japonica (Rice) protein is COBRA-like protein 4 (BC1L9).